A 645-amino-acid polypeptide reads, in one-letter code: MGDRRPQDRPRSQGMDSKPWYCDKPPSKYFAKRKHRRLRFPPVDTQNWVFVTEGMDDFRYACQSPEDTLVCRRDEFLLPKISLRGPQADRKSRKKKLLKKAALFSELSPVQPARKAFVEEVEAQLMTKHPLAMYPNLGKDMPPDLLLQVLKQLDPERKLEDAWARCEAREKTTEVPTESGKYPCGESCPRPPETPVSRLRPQLPKTPVSSRRPEPPKTRVSSLRPEPPKTRVSSLHPEPPETRASHLRVDPPETGVSHLCPEPPKTLVSSVHPEPPDTGASHLCPEPPETRVSHLHPEPPETGVSHLRPEPSKTQVSSLCPEPPEAGVSHLCLEPPNTHRVSSFLLQVLKLDSEKKLEDARARCEGQEMTTEELTKPGKYHFWESCPRPFESRMPHLRLVLPITRRMASLCLKPPKTRRVSSLCPEPTKTGASHLKELFQEDTPSTMECVSDSLQRRHTSRKLRDFKWAGDLGVNEESISSLFDFTPECRTTDQDQKIKKANECASRLMYGMELDDMDEVEFLRIKYWDRRRRAAPHSYSAQRGRIRYGPWYFEPKLGKKLRSDEPLIDPKPVLEKPDEPDILDGLYGPIAFKDFILSKGYRMPGVIEKLFAKKGWTYDSVKTPIQRAVQVYKYKEDVTDASKED.

3 stretches are compositionally biased toward basic and acidic residues: residues 1 to 11 (MGDRRPQDRPR), 238 to 251 (EPPETRASHLRVDP), and 288 to 299 (PETRVSHLHPEP). Disordered regions lie at residues 1 to 23 (MGDRRPQDRPRSQGMDSKPWYCD) and 168 to 321 (AREK…SLCP).

It belongs to the FAM47 family.

The chain is Protein FAM47B (FAM47B) from Homo sapiens (Human).